A 481-amino-acid polypeptide reads, in one-letter code: Probable Xaa-Pro aminopeptidase PEPP (481 aa).

Residues Asp265, Asp276, Glu399, and Glu439 each coordinate Mn(2+).

It belongs to the peptidase M24B family. Mn(2+) is required as a cofactor.

It carries out the reaction Release of any N-terminal amino acid, including proline, that is linked to proline, even from a dipeptide or tripeptide.. Functionally, catalyzes the removal of a penultimate prolyl residue from the N-termini of peptides. This Uncinocarpus reesii (strain UAMH 1704) protein is Probable Xaa-Pro aminopeptidase PEPP (PEPP).